The chain runs to 424 residues: Tyrosine--tRNA ligase (424 aa).

Tyrosine 33 serves as a coordination point for L-tyrosine. The 'HIGH' region motif lies at 38–47; it reads PSADSLHIGH. L-tyrosine is bound by residues tyrosine 170 and glutamine 174. A 'KMSKS' region motif is present at residues 230-234; sequence KFGKT. Lysine 233 provides a ligand contact to ATP. Residues 357–424 enclose the S4 RNA-binding domain; that stretch reads MSLIDALVRC…RRHYHLIRLV (68 aa).

It belongs to the class-I aminoacyl-tRNA synthetase family. TyrS type 1 subfamily. In terms of assembly, homodimer.

It localises to the cytoplasm. It catalyses the reaction tRNA(Tyr) + L-tyrosine + ATP = L-tyrosyl-tRNA(Tyr) + AMP + diphosphate + H(+). In terms of biological role, catalyzes the attachment of tyrosine to tRNA(Tyr) in a two-step reaction: tyrosine is first activated by ATP to form Tyr-AMP and then transferred to the acceptor end of tRNA(Tyr). In Roseiflexus castenholzii (strain DSM 13941 / HLO8), this protein is Tyrosine--tRNA ligase.